Reading from the N-terminus, the 491-residue chain is (1S)-1-hydroxy-luvungin A synthase CYP88A37 (491 aa).

Residues Phe5–Val25 traverse the membrane as a helical segment. A heme-binding site is contributed by Cys439.

Belongs to the cytochrome P450 family. The cofactor is heme. Expressed in maturing fruits and in juice vesicles.

It localises to the membrane. It carries out the reaction luvungin A + reduced [NADPH--hemoprotein reductase] + O2 = (1S)-1-hydroxy-luvungin A + oxidized [NADPH--hemoprotein reductase] + H2O + H(+). Its pathway is secondary metabolite biosynthesis; terpenoid biosynthesis. In terms of biological role, monooxygenase involved in the biosynthesis of limonoids triterpene natural products such as limonin, a compound with insecticidal activity responsible for the bitter taste in citrus. Catalyzes the conversion of luvungin A to (1S)-1-hydroxy-luvungin A. The polypeptide is (1S)-1-hydroxy-luvungin A synthase CYP88A37 (Citrus sinensis (Sweet orange)).